Consider the following 370-residue polypeptide: Putative replication factor C small subunit L478 (370 aa).

Residue 41–48 (GPSGSGKK) participates in ATP binding. Over residues 342–353 (RNKEPEKSEKTK) the composition is skewed to basic and acidic residues. A disordered region spans residues 342-370 (RNKEPEKSEKTKSKTGKLSRTNSKKTIKN). A compositionally biased stretch (basic residues) spans 354-370 (SKTGKLSRTNSKKTIKN).

Belongs to the activator 1 small subunits family. RfcS subfamily.

Functionally, part of the RFC clamp loader complex which loads the PCNA sliding clamp onto DNA. This is Putative replication factor C small subunit L478 from Acanthamoeba polyphaga (Amoeba).